The following is a 65-amino-acid chain: Photosystem II reaction center protein J (65 aa).

Residues 35 to 55 traverse the membrane as a helical segment; the sequence is LWLVATAGGTAVIFVLGIFFY.

Belongs to the PsbJ family. PSII is composed of 1 copy each of membrane proteins PsbA, PsbB, PsbC, PsbD, PsbE, PsbF, PsbH, PsbI, PsbJ, PsbK, PsbL, PsbM, PsbT, PsbX, PsbY, Psb30/Ycf12, peripheral proteins PsbO, CyanoQ (PsbQ), PsbU, PsbV and a large number of cofactors. It forms dimeric complexes.

The protein localises to the cellular thylakoid membrane. Its function is as follows. One of the components of the core complex of photosystem II (PSII). PSII is a light-driven water:plastoquinone oxidoreductase that uses light energy to abstract electrons from H(2)O, generating O(2) and a proton gradient subsequently used for ATP formation. It consists of a core antenna complex that captures photons, and an electron transfer chain that converts photonic excitation into a charge separation. The polypeptide is Photosystem II reaction center protein J (Prochlorococcus marinus (strain NATL1A)).